The chain runs to 54 residues: Califin-B (54 aa).

C25 and C53 are disulfide-bonded. Residue L36 is modified to Leucine amide.

This sequence belongs to the molluscan ELH family. As to quaternary structure, this protein consists of a large 36-residue subunit, bound by a single disulfide-bond to a small 18-residue subunit.

It is found in the secreted. Injected in sexually mature animals califin B excites LB and LC cells of the abdominal ganglion and cause egg-laying. The chain is Califin-B from Aplysia californica (California sea hare).